We begin with the raw amino-acid sequence, 239 residues long: Ribonuclease 3 (239 aa).

The RNase III domain maps to 12–137 (RAKLEGLIGH…LIAAIYLDGG (126 aa)). Glutamate 50 provides a ligand contact to Mg(2+). The active site involves aspartate 54. The Mg(2+) site is built by aspartate 123 and glutamate 126. Glutamate 126 is a catalytic residue. Residues 162-231 (DAKTELQEWS…ATKMLEREGI (70 aa)) enclose the DRBM domain.

Belongs to the ribonuclease III family. Homodimer. It depends on Mg(2+) as a cofactor.

The protein resides in the cytoplasm. It catalyses the reaction Endonucleolytic cleavage to 5'-phosphomonoester.. Functionally, digests double-stranded RNA. Involved in the processing of primary rRNA transcript to yield the immediate precursors to the large and small rRNAs (23S and 16S). Processes some mRNAs, and tRNAs when they are encoded in the rRNA operon. Processes pre-crRNA and tracrRNA of type II CRISPR loci if present in the organism. In Rhizobium leguminosarum bv. trifolii (strain WSM2304), this protein is Ribonuclease 3.